The chain runs to 374 residues: Putative glutamate--cysteine ligase 2 (374 aa).

This sequence belongs to the glutamate--cysteine ligase type 2 family. YbdK subfamily.

The catalysed reaction is L-cysteine + L-glutamate + ATP = gamma-L-glutamyl-L-cysteine + ADP + phosphate + H(+). Functionally, ATP-dependent carboxylate-amine ligase which exhibits weak glutamate--cysteine ligase activity. The polypeptide is Putative glutamate--cysteine ligase 2 (Laribacter hongkongensis (strain HLHK9)).